A 774-amino-acid chain; its full sequence is Glycophorin-binding protein 130 (774 aa).

Residues Arg84–Glu88 carry the PEXEL motif motif. Disordered stretches follow at residues Glu97–Pro243, Leu256–Ser291, Asp310–Gln334, Asn358–Gly383, Asp410–Gln434, Asn458–Glu481, Asp509–Gln533, Asp609–Gly632, Asn661–Gly682, and Asp709–Ile734. Basic and acidic residues-rich tracts occupy residues Thr117–Gln140 and Lys174–Ala198. A compositionally biased stretch (polar residues) spans Val201–Ser228. 11 GBP repeats span residues Leu226–Asp275, Leu276–Asp325, Leu326–Asp375, Leu376–Asp425, Leu426–Glu474, Leu475–Asp524, Leu525–Glu574, Leu575–Asp624, Leu625–Asp674, Leu675–Asp724, and Leu725–Ala774. Composition is skewed to basic and acidic residues over residues Glu264–Leu276, Asp314–Leu326, Glu364–Leu376, Glu414–Leu426, Glu464–Thr476, Glu513–Leu525, Glu613–Leu625, Glu663–Leu675, and Asp713–Leu725.

In terms of assembly, interacts with host glycophorin.

It localises to the secreted. The protein localises to the cell surface. Its subcellular location is the host cytoplasm. In terms of biological role, involved in merozoite invasion of host erythrocytes. The polypeptide is Glycophorin-binding protein 130 (Plasmodium falciparum (isolate FCR-3 / Gambia)).